A 95-amino-acid polypeptide reads, in one-letter code: Co-chaperonin GroES (95 aa).

It belongs to the GroES chaperonin family. Heptamer of 7 subunits arranged in a ring. Interacts with the chaperonin GroEL.

Its subcellular location is the cytoplasm. Functionally, together with the chaperonin GroEL, plays an essential role in assisting protein folding. The GroEL-GroES system forms a nano-cage that allows encapsulation of the non-native substrate proteins and provides a physical environment optimized to promote and accelerate protein folding. GroES binds to the apical surface of the GroEL ring, thereby capping the opening of the GroEL channel. The polypeptide is Co-chaperonin GroES (Rhizorhabdus wittichii (strain DSM 6014 / CCUG 31198 / JCM 15750 / NBRC 105917 / EY 4224 / RW1) (Sphingomonas wittichii)).